Here is a 166-residue protein sequence, read N- to C-terminus: Small ribosomal subunit protein uS5 (166 aa).

Residues 11–74 (FLEKLIAVNR…EKARRNMVDV (64 aa)) enclose the S5 DRBM domain.

This sequence belongs to the universal ribosomal protein uS5 family. As to quaternary structure, part of the 30S ribosomal subunit. Contacts proteins S4 and S8.

Its function is as follows. With S4 and S12 plays an important role in translational accuracy. In terms of biological role, located at the back of the 30S subunit body where it stabilizes the conformation of the head with respect to the body. This is Small ribosomal subunit protein uS5 from Alteromonas mediterranea (strain DSM 17117 / CIP 110805 / LMG 28347 / Deep ecotype).